The following is a 490-amino-acid chain: 2-succinylbenzoate--CoA ligase (490 aa).

It belongs to the ATP-dependent AMP-binding enzyme family. MenE subfamily.

It carries out the reaction 2-succinylbenzoate + ATP + CoA = 2-succinylbenzoyl-CoA + AMP + diphosphate. The protein operates within quinol/quinone metabolism; 1,4-dihydroxy-2-naphthoate biosynthesis; 1,4-dihydroxy-2-naphthoate from chorismate: step 5/7. Its pathway is quinol/quinone metabolism; menaquinone biosynthesis. In terms of biological role, converts 2-succinylbenzoate (OSB) to 2-succinylbenzoyl-CoA (OSB-CoA). The polypeptide is 2-succinylbenzoate--CoA ligase (Geobacillus kaustophilus (strain HTA426)).